A 1005-amino-acid polypeptide reads, in one-letter code: DNA double-strand break repair Rad50 ATPase (1005 aa).

ATP-binding positions include Lys-14, 35-40, 62-64, and Gln-134; these read GSGKSS and ITK. Coiled coils occupy residues 189–230, 292–321, 346–379, and 404–498; these read KENY…IEKL, LVDE…KQLE, LDTL…EIEK, and AVEY…LKEV. A Zinc-hook domain is found at 457–554; the sequence is IEEKKKVLEN…DIEKLKKEID (98 aa). Positions 502 and 505 each coordinate Zn(2+). Coiled coils occupy residues 523 to 600, 656 to 692, and 800 to 834; these read TQLN…YVIN, KEKC…ELIE, and RQEL…LKEM.

The protein belongs to the SMC family. RAD50 subfamily. Homodimer. Forms a heterotetramer composed of two Mre11 subunits and two Rad50 subunits. Zn(2+) is required as a cofactor.

Its function is as follows. Part of the Rad50/Mre11 complex, which is involved in the early steps of DNA double-strand break (DSB) repair. The complex may facilitate opening of the processed DNA ends to aid in the recruitment of HerA and NurA. Rad50 controls the balance between DNA end bridging and DNA resection via ATP-dependent structural rearrangements of the Rad50/Mre11 complex. This Methanocaldococcus jannaschii (strain ATCC 43067 / DSM 2661 / JAL-1 / JCM 10045 / NBRC 100440) (Methanococcus jannaschii) protein is DNA double-strand break repair Rad50 ATPase.